The chain runs to 577 residues: Cytochrome P450 714D1 (577 aa).

The Lumenal portion of the chain corresponds to 1–3; it reads MES. A helical; Signal-anchor for type III membrane protein membrane pass occupies residues 4–24; it reads FFVFFTAAALPVVVAAAVIAG. Residues 25–577 lie on the Cytoplasmic side of the membrane; that stretch reads LCITAAWLAR…STAPVHSSHN (553 aa). Residues 315–343 form a disordered region; sequence REHGGKAAPPSPPERDFLGSIIENSGGQP. Position 504 (cysteine 504) interacts with heme.

Belongs to the cytochrome P450 family. Heme serves as cofactor. As to expression, expressed in rapidly elongating or dividing tissues, including the shoot apical meristem, the intercalary meristem and elongating zones of internodes, and panicle but not in young seedlings, roots and leaves. During the heading stage, the highest expression is detected in the flowering spikelets, anthers, the divisional zone and the node of the uppermost internode.

The protein localises to the endoplasmic reticulum membrane. Its function is as follows. Catalyzes the 16alpha,17-epoxidation on non-13-hydroxylated gibberellins (GAs), including GA4, GA9, and GA12. No activity with GA1, GA20, GA53 or ent-kaurenoic acid. Reduces the biological activity of GAs. The sequence is that of Cytochrome P450 714D1 (CYP714D1) from Oryza sativa subsp. japonica (Rice).